Here is a 1240-residue protein sequence, read N- to C-terminus: MFCAAGGPASPGGKPAARAASGFFAPHNPRGATQTAPPPCRRQNFYNPHLAQTGTQPKALGPAQRHTYYSECDEFRFIAPRSLDEDAPAEQRTGVHDGRLRRAPKVYCGGDERDVLRVGPEGFWPRRLRLWGGADHAPEGFDPTVTVFHVYDILEHVEHAYSMRAAQLHERFMDAITPAGTVITLLGLTPEGHRVAVHVYGTRQYFYMNKAEVDRHLQCRAPRDLCERLAAALRESPGASFRGISADHFEAEVVERADVYYYETRPTLYYRVFVRSGRALAYLCDNFCPAIRKYEGGVDATTRFILDNPGFVTFGWYRLKPGRGNAPAQPRPPTAFGTSSDVEFNCTADNLAVEGAMCDLPAYKLMCFDIECKAGGEDELAFPVAERPEDLVIQISCLLYDLSTTALEHILLFSLGSCDLPESHLSDLASRGLPAPVVLEFDSEFEMLLAFMTFVKQYGPEFVTGYNIINFDWPFVLTKLTEIYKVPLDGYGRMNGRGVFRVWDIGQSHFQKRSKIKVNGMVNIDMYGIITDKVKLSSYKLNAVAEAVLKDKKKDLSYRDIPAYYASGPAQRGVIGEYCVQDSLLVGQLFFKFLPHLELSAVARLAGINITRTIYDGQQIRVFTCLLRLAGQKGFILPDTQGRFRGLDKEAPKRPAVPRGEGERPGDGNGDEDKDDDEDGDEDGDEREEVARETGGRHVGYQGARVLDPTSGFHVDPVVVFDFASLYPSIIQAHNLCFSTLSLRPEAVAHLEADRDYLEIEVGGRRLFFVKAHVRESLLSILLRDWLAMRKQIRSRIPQSTPEEAVLLDKQQAAIKVVCNSVYGFTGVQHGLLPCLHVAATVTTIGREMLLATRAYVHARWAEFDQLLADFPEAAGMRAPGPYSMRIIYGDTDSIFVLCRGLTAAGLVAMGDKMASHISRALFLPPIKLECEKTFTKLLLIAKKKYIGVICGGKMLIKGVDLVRKNNCAFINRTSRALVDLLFYDDTVSGAAAALAERPAEEWLARPLPEGLQAFGAVLVDAHRRITDPERDIQDFVLTAELSRHPRAYTNKRLAHLTVYYKLMARRAQVPSIKDRIPYVIVAQTREVEETVARLAALRELDAAAPGDEPAPPAALPSPAKRPRETPSHADPPGGASKPRKLLVSELAEDPGYAIARGVPLNTDYYFSHLLGAACVTFKALFGNNAKITESLLKRFIPETWHPPDDVAARLRAAGFGPAGAGATAEETRRMLHRAFDTLA.

Over residues 1 to 22 the composition is skewed to low complexity; the sequence is MFCAAGGPASPGGKPAARAASG. Disordered regions lie at residues 1 to 44, 646 to 695, and 1103 to 1139; these read MFCA…RRQN, GLDK…RETG, and AAAP…ASKP. A compositionally biased stretch (acidic residues) spans 669–688; the sequence is NGDEDKDDDEDGDEDGDERE.

The protein belongs to the DNA polymerase type-B family. As to quaternary structure, forms a complex with the ssDNA-binding protein UL29, the DNA polymerase processivity factor, and the alkaline exonuclease. Interacts with the putative helicase-primase complex subunit UL8; this interaction may coordinate leading and lagging strand DNA synthesis at the replication fork.

The protein resides in the host nucleus. It catalyses the reaction DNA(n) + a 2'-deoxyribonucleoside 5'-triphosphate = DNA(n+1) + diphosphate. The enzyme catalyses Endonucleolytic cleavage to 5'-phosphomonoester.. In terms of biological role, replicates viral genomic DNA. The replication complex is composed of six viral proteins: the DNA polymerase, processivity factor, primase, primase-associated factor, helicase, and ssDNA-binding protein. Additionally, the polymerase contains an intrinsic ribonuclease H (RNase H) activity that specifically degrades RNA/DNA heteroduplexes or duplex DNA substrates in the 5' to 3' direction. Therefore, it can catalyze the excision of the RNA primers that initiate the synthesis of Okazaki fragments at a replication fork during viral DNA replication. In Human herpesvirus 2 (strain HG52) (HHV-2), this protein is DNA polymerase catalytic subunit.